A 347-amino-acid polypeptide reads, in one-letter code: Heat-inducible transcription repressor HrcA (347 aa).

This sequence belongs to the HrcA family.

Negative regulator of class I heat shock genes (grpE-dnaK-dnaJ and groELS operons). Prevents heat-shock induction of these operons. In Lactiplantibacillus plantarum (strain ATCC BAA-793 / NCIMB 8826 / WCFS1) (Lactobacillus plantarum), this protein is Heat-inducible transcription repressor HrcA.